The primary structure comprises 279 residues: MKLCGFEAGLDKPFFLIAGPCVIESRDMAFETAGALKEICVELGIPFIYKSSYDKANRSSGKSYRGMGMEKGLEILADVKKQLGVPVLTDVHAIDEIPAVAAAVDVLQTPAFLCRQTDFIHAVAASGRPVNIKKGQFLAPGDMKNVVDKAREANGGADTIMVCERGASFGYNNLVSDMRSLAIMRETGCPVVFDATHSVQLPGGQGTASGGQREFVPVLARAAVAVGIAGLFMESHPDPAKALSDGPNAWPLPKMKALLATLKEIDALVKAHGFMEMAG.

It belongs to the KdsA family.

Its subcellular location is the cytoplasm. It carries out the reaction D-arabinose 5-phosphate + phosphoenolpyruvate + H2O = 3-deoxy-alpha-D-manno-2-octulosonate-8-phosphate + phosphate. Its pathway is carbohydrate biosynthesis; 3-deoxy-D-manno-octulosonate biosynthesis; 3-deoxy-D-manno-octulosonate from D-ribulose 5-phosphate: step 2/3. It functions in the pathway bacterial outer membrane biogenesis; lipopolysaccharide biosynthesis. This chain is 2-dehydro-3-deoxyphosphooctonate aldolase, found in Aromatoleum aromaticum (strain DSM 19018 / LMG 30748 / EbN1) (Azoarcus sp. (strain EbN1)).